Reading from the N-terminus, the 507-residue chain is Bifunctional purine biosynthesis protein PurH (507 aa).

The MGS-like domain occupies 1 to 144; that stretch reads MKRALLSVSD…KNSDSVWAVV (144 aa).

Belongs to the PurH family.

It carries out the reaction (6R)-10-formyltetrahydrofolate + 5-amino-1-(5-phospho-beta-D-ribosyl)imidazole-4-carboxamide = 5-formamido-1-(5-phospho-D-ribosyl)imidazole-4-carboxamide + (6S)-5,6,7,8-tetrahydrofolate. It catalyses the reaction IMP + H2O = 5-formamido-1-(5-phospho-D-ribosyl)imidazole-4-carboxamide. The protein operates within purine metabolism; IMP biosynthesis via de novo pathway; 5-formamido-1-(5-phospho-D-ribosyl)imidazole-4-carboxamide from 5-amino-1-(5-phospho-D-ribosyl)imidazole-4-carboxamide (10-formyl THF route): step 1/1. It functions in the pathway purine metabolism; IMP biosynthesis via de novo pathway; IMP from 5-formamido-1-(5-phospho-D-ribosyl)imidazole-4-carboxamide: step 1/1. The protein is Bifunctional purine biosynthesis protein PurH of Lacticaseibacillus casei (strain BL23) (Lactobacillus casei).